Reading from the N-terminus, the 417-residue chain is Dibenzothiophene monooxygenase (417 aa).

A helical N-terminus region spans residues Asn18–Asn124. FMN contacts are provided by residues Tyr96, Asn129–Asn134, Lys159–Ser163, Arg282, Ala369–Arg370, and His391. Residues Trp125–Ala233 are central beta-barrel N-terminus. The interval Ser131–Lys142 is lid loop. The segment at Pro234–Ser417 is helical C-terminus.

Belongs to the DszC flavin monooxygenase family. Homotetramer formed by a dimer of dimers; FMN binds between monomers of the homodimer.

The protein localises to the cytoplasm. It carries out the reaction dibenzothiophene + 2 FMNH2 + 2 O2 = dibenzothiophene 5,5-dioxide + 2 FMN + 2 H2O + 2 H(+). The enzyme catalyses dibenzothiophene + FMNH2 + O2 = dibenzothiophene 5-oxide + FMN + H2O + H(+). The catalysed reaction is dibenzothiophene 5-oxide + FMNH2 + O2 = dibenzothiophene 5,5-dioxide + FMN + H2O + H(+). The protein operates within sulfur metabolism; dibenzothiophene degradation. Its activity is regulated as follows. DBT degradation completely inhibited by Cu(2+), Mn(2+), p-chloromercuribenzoic acid, 2,2-bipyridyl, 1,10-phenanthroline, and strongly inhibited by Zn(2+), 5,5'- Dithiobis(2-nitrobenzoic acid) and 8-quinolinol. In terms of biological role, catalyzes the first step of the '4S' desulfurization pathway that removes covalently bound sulfur from dibenzothiophene (DBT) without breaking carbon-carbon bonds. Sulfur dioxygenase which converts DBT to DBT-sulfone (DBTO2 or DBT 5,5-dioxide) in a stepwise manner. Also acts on thioxanthen-9-one and 4,6-dimethyl DBT and 2,8-dimethyl DBT. This Rhodococcus erythropolis (Arthrobacter picolinophilus) protein is Dibenzothiophene monooxygenase.